A 202-amino-acid chain; its full sequence is NADH-quinone oxidoreductase subunit C (202 aa).

The protein belongs to the complex I 30 kDa subunit family. As to quaternary structure, NDH-1 is composed of 14 different subunits. Subunits NuoB, C, D, E, F, and G constitute the peripheral sector of the complex.

It is found in the cell inner membrane. The catalysed reaction is a quinone + NADH + 5 H(+)(in) = a quinol + NAD(+) + 4 H(+)(out). In terms of biological role, NDH-1 shuttles electrons from NADH, via FMN and iron-sulfur (Fe-S) centers, to quinones in the respiratory chain. The immediate electron acceptor for the enzyme in this species is believed to be ubiquinone. Couples the redox reaction to proton translocation (for every two electrons transferred, four hydrogen ions are translocated across the cytoplasmic membrane), and thus conserves the redox energy in a proton gradient. In Bartonella henselae (strain ATCC 49882 / DSM 28221 / CCUG 30454 / Houston 1) (Rochalimaea henselae), this protein is NADH-quinone oxidoreductase subunit C.